The chain runs to 297 residues: Aspartate carbamoyltransferase catalytic subunit (297 aa).

Residues Arg51 and Thr52 each contribute to the carbamoyl phosphate site. Lys79 is a binding site for L-aspartate. The carbamoyl phosphate site is built by Arg101, His129, and Gln132. Residues Arg162 and Arg216 each coordinate L-aspartate. Carbamoyl phosphate-binding residues include Gly257 and Pro258.

Belongs to the aspartate/ornithine carbamoyltransferase superfamily. ATCase family. Heterododecamer (2C3:3R2) of six catalytic PyrB chains organized as two trimers (C3), and six regulatory PyrI chains organized as three dimers (R2).

The enzyme catalyses carbamoyl phosphate + L-aspartate = N-carbamoyl-L-aspartate + phosphate + H(+). The protein operates within pyrimidine metabolism; UMP biosynthesis via de novo pathway; (S)-dihydroorotate from bicarbonate: step 2/3. In terms of biological role, catalyzes the condensation of carbamoyl phosphate and aspartate to form carbamoyl aspartate and inorganic phosphate, the committed step in the de novo pyrimidine nucleotide biosynthesis pathway. This is Aspartate carbamoyltransferase catalytic subunit from Myxococcus xanthus (strain DK1622).